The chain runs to 272 residues: Phosphate import ATP-binding protein PstB 1 (272 aa).

One can recognise an ABC transporter domain in the interval 26 to 267 (ISIENLNLFY…PMKKQTEDYI (242 aa)). ATP is bound at residue 58–65 (GPSGCGKS).

Belongs to the ABC transporter superfamily. Phosphate importer (TC 3.A.1.7) family. The complex is composed of two ATP-binding proteins (PstB), two transmembrane proteins (PstC and PstA) and a solute-binding protein (PstS).

It is found in the cell inner membrane. The enzyme catalyses phosphate(out) + ATP + H2O = ADP + 2 phosphate(in) + H(+). In terms of biological role, part of the ABC transporter complex PstSACB involved in phosphate import. Responsible for energy coupling to the transport system. The protein is Phosphate import ATP-binding protein PstB 1 of Vibrio parahaemolyticus serotype O3:K6 (strain RIMD 2210633).